The sequence spans 176 residues: ATP-dependent protease subunit HslV (176 aa).

Threonine 2 is a catalytic residue. 3 residues coordinate Na(+): glycine 157, cysteine 160, and threonine 163.

It belongs to the peptidase T1B family. HslV subfamily. A double ring-shaped homohexamer of HslV is capped on each side by a ring-shaped HslU homohexamer. The assembly of the HslU/HslV complex is dependent on binding of ATP.

The protein resides in the cytoplasm. It carries out the reaction ATP-dependent cleavage of peptide bonds with broad specificity.. Its activity is regulated as follows. Allosterically activated by HslU binding. Functionally, protease subunit of a proteasome-like degradation complex believed to be a general protein degrading machinery. The chain is ATP-dependent protease subunit HslV from Salmonella gallinarum (strain 287/91 / NCTC 13346).